Here is a 154-residue protein sequence, read N- to C-terminus: Protein X (154 aa).

The tract at residues 68 to 117 (PCALRFTSARRMETTVNAHGNLPKVLHKRTLGLSAMSTTDLEAYFKDCVF) is mitochondrial targeting sequence.

This sequence belongs to the orthohepadnavirus protein X family. In terms of assembly, may form homodimer. May interact with host CEBPA, CFLAR, CREB1, DDB1, E4F1, HBXIP, HSPD1/HSP60, NFKBIA, POLR2E and SMAD4. Interacts with host SMC5-SMC6 complex and induces its degradation. Interacts with host TRPC4AP; leading to prevent ubiquitination of TRPC4AP. Interacts with host PLSCR1; this interaction promotes ubiquitination and degradation of HBx and impairs HBx-mediated cell proliferation. In terms of processing, a fraction may be phosphorylated in insect cells and HepG2 cells, a human hepatoblastoma cell line. Phosphorylated in vitro by host protein kinase C or mitogen-activated protein kinase. N-acetylated in insect cells.

It localises to the host cytoplasm. The protein localises to the host nucleus. It is found in the host mitochondrion. In terms of biological role, multifunctional protein that plays a role in silencing host antiviral defenses and promoting viral transcription. Does not seem to be essential for HBV infection. May be directly involved in development of cirrhosis and liver cancer (hepatocellular carcinoma). Most of cytosolic activities involve modulation of cytosolic calcium. The effect on apoptosis is controversial depending on the cell types in which the studies have been conducted. May induce apoptosis by localizing in mitochondria and causing loss of mitochondrial membrane potential. May also modulate apoptosis by binding host CFLAR, a key regulator of the death-inducing signaling complex (DISC). Promotes viral transcription by using the host E3 ubiquitin ligase DDB1 to target the SMC5-SMC6 complex to proteasomal degradation. This host complex would otherwise bind to viral episomal DNA, and prevents its transcription. Moderately stimulates transcription of many different viral and cellular transcription elements. Promoters and enhancers stimulated by HBx contain DNA binding sites for NF-kappa-B, AP-1, AP-2, c-EBP, ATF/CREB, or the calcium-activated factor NF-AT. This Hepatitis B virus genotype B/C subtype adw (isolate Okinawa/pODW282/1998) (HBV-B) protein is Protein X.